We begin with the raw amino-acid sequence, 486 residues long: UDP-N-acetylmuramate--L-alanine ligase (486 aa).

129-135 (GTHGKTT) serves as a coordination point for ATP.

The protein belongs to the MurCDEF family.

The protein localises to the cytoplasm. The catalysed reaction is UDP-N-acetyl-alpha-D-muramate + L-alanine + ATP = UDP-N-acetyl-alpha-D-muramoyl-L-alanine + ADP + phosphate + H(+). It participates in cell wall biogenesis; peptidoglycan biosynthesis. In terms of biological role, cell wall formation. The protein is UDP-N-acetylmuramate--L-alanine ligase of Vibrio vulnificus (strain YJ016).